A 188-amino-acid chain; its full sequence is Pro-FMRFamide-related neuropeptide VF (188 aa).

A signal peptide spans 1–26 (MEIISLKRFILLTVATSSFLTSNTFC). Positions 27-57 (TDEFMMPHFHSKEGDGKYSQLRGIPKGEKER) are excised as a propeptide. Phe-94 is subject to Phenylalanine amide. Positions 97 to 106 (TIDEKRSPAA) are excised as a propeptide. 2 disordered regions span residues 116 to 144 (SHFP…QKPL) and 163 to 188 (IQSP…KPEK). Position 125 is a phenylalanine amide (Phe-125). The propeptide occupies 128–188 (TTARSPKTPA…TDDAERKPEK (61 aa)).

The protein belongs to the FARP (FMRFamide related peptide) family.

Its subcellular location is the secreted. Its function is as follows. Efficiently inhibits forskolin-induced production of cAMP. Acts as a potent negative regulator of gonadotropin synthesis and secretion. Induces secretion of prolactin. Functionally, efficiently inhibits forskolin-induced production of cAMP. Blocks morphine-induced analgesia. In Mus musculus (Mouse), this protein is Pro-FMRFamide-related neuropeptide VF (Npvf).